We begin with the raw amino-acid sequence, 448 residues long: Homogentisate 1,2-dioxygenase (448 aa).

Histidine 303 functions as the Proton acceptor in the catalytic mechanism. Positions 346 and 352 each coordinate Fe cation. Residues tyrosine 361 and histidine 382 each contribute to the homogentisate site. Residue histidine 382 participates in Fe cation binding.

It belongs to the homogentisate dioxygenase family. In terms of assembly, hexamer; dimer of trimers. Fe cation is required as a cofactor.

The enzyme catalyses homogentisate + O2 = 4-maleylacetoacetate + H(+). It participates in amino-acid degradation; L-phenylalanine degradation; acetoacetate and fumarate from L-phenylalanine: step 4/6. Its function is as follows. Involved in the catabolism of homogentisate (2,5-dihydroxyphenylacetate or 2,5-OH-PhAc), a central intermediate in the degradation of phenylalanine and tyrosine. Catalyzes the oxidative ring cleavage of the aromatic ring of homogentisate to yield maleylacetoacetate. The sequence is that of Homogentisate 1,2-dioxygenase from Rhodopseudomonas palustris (strain HaA2).